The chain runs to 168 residues: Xanthine-guanine phosphoribosyltransferase (168 aa).

Residues 46–47 (RG) and 101–109 (DDLVDSGVT) each bind 5-phospho-alpha-D-ribose 1-diphosphate. A Mg(2+)-binding site is contributed by Asp-102. Position 105 (Asp-105) interacts with guanine. Asp-105 and Val-148 together coordinate xanthine. Residues 105–109 (DSGVT) and 147–148 (WV) contribute to the GMP site.

This sequence belongs to the purine/pyrimidine phosphoribosyltransferase family. XGPT subfamily. In terms of assembly, homotetramer. Mg(2+) serves as cofactor.

It is found in the cell inner membrane. It carries out the reaction GMP + diphosphate = guanine + 5-phospho-alpha-D-ribose 1-diphosphate. It catalyses the reaction XMP + diphosphate = xanthine + 5-phospho-alpha-D-ribose 1-diphosphate. The catalysed reaction is IMP + diphosphate = hypoxanthine + 5-phospho-alpha-D-ribose 1-diphosphate. It participates in purine metabolism; GMP biosynthesis via salvage pathway; GMP from guanine: step 1/1. Its pathway is purine metabolism; XMP biosynthesis via salvage pathway; XMP from xanthine: step 1/1. Functionally, purine salvage pathway enzyme that catalyzes the transfer of the ribosyl-5-phosphate group from 5-phospho-alpha-D-ribose 1-diphosphate (PRPP) to the N9 position of the 6-oxopurines guanine and xanthine to form the corresponding ribonucleotides GMP (guanosine 5'-monophosphate) and XMP (xanthosine 5'-monophosphate), with the release of PPi. To a lesser extent, also acts on hypoxanthine. The protein is Xanthine-guanine phosphoribosyltransferase of Gluconobacter oxydans (strain 621H) (Gluconobacter suboxydans).